Reading from the N-terminus, the 318-residue chain is MRGEIMDYTICREIGKGGFGKVYEVKKKADQKSYALKIETNAPKAGRNSIINEIQAYSELQGCEKIPRLVDHGSYEGLTFLVLPLLKYSLKDLLERHPRFFTKKSATIVGKKLLNAIEFIHGKGRLHRDIKPENVMFGHNNRIYLVDFGMSAPYLRGDGSHIPEVGGKSVSGTLWYMSINTHRGIEQSRRDDLESLFYLLILLYKSRLPWMEPGASVSKKQEARTKEIKENLSVYDLCDGIHGKEHLIKFFQHISSLEFAEKPNYRYLNSLLDKIFHSNKELQGYKRAPKKEDTGLIRTSLWHKFISILSPFEVKYDG.

Residues 8–276 enclose the Protein kinase domain; sequence YTICREIGKG…YLNSLLDKIF (269 aa). ATP contacts are provided by residues 14–22 and Lys-37; that span reads IGKGGFGKV. The active-site Proton acceptor is the Asp-129.

It belongs to the protein kinase superfamily. CK1 Ser/Thr protein kinase family. Casein kinase I subfamily.

The protein localises to the nucleus. The enzyme catalyses L-seryl-[protein] + ATP = O-phospho-L-seryl-[protein] + ADP + H(+). It catalyses the reaction L-threonyl-[protein] + ATP = O-phospho-L-threonyl-[protein] + ADP + H(+). Involved in DNA repair. May regulate the activity of protein(s) involved in double strand break repair caused by gamma rays. This chain is Probable casein kinase I homolog ECU11_1980, found in Encephalitozoon cuniculi (strain GB-M1) (Microsporidian parasite).